We begin with the raw amino-acid sequence, 148 residues long: MRSIMINTIQLGQRYLETYPNQKKLALFMPDYRLIRLVKQAARFMPIFACFAILWQYFFTDPTQSILANAIITSLFAISLPYQGLYWLGKRANTPLPLSLLDWYQSLKQKLISEQKIMQDQAVPSYQDFANLLKLAEETWGDNYFNEL.

A run of 2 helical transmembrane segments spans residues 41–60 and 66–88; these read AARFMPIFACFAILWQYFFT and ILANAIITSLFAISLPYQGLYWL.

It belongs to the UPF0208 family.

The protein localises to the cell inner membrane. This chain is UPF0208 membrane protein HD_1715, found in Haemophilus ducreyi (strain 35000HP / ATCC 700724).